A 465-amino-acid chain; its full sequence is Argininosuccinate lyase (465 aa).

This sequence belongs to the lyase 1 family. Argininosuccinate lyase subfamily.

It localises to the cytoplasm. The enzyme catalyses 2-(N(omega)-L-arginino)succinate = fumarate + L-arginine. It functions in the pathway amino-acid biosynthesis; L-arginine biosynthesis; L-arginine from L-ornithine and carbamoyl phosphate: step 3/3. This is Argininosuccinate lyase from Clostridium botulinum (strain Alaska E43 / Type E3).